The following is a 304-amino-acid chain: GTP cyclohydrolase FolE2 (304 aa).

The protein belongs to the GTP cyclohydrolase IV family.

It catalyses the reaction GTP + H2O = 7,8-dihydroneopterin 3'-triphosphate + formate + H(+). Its pathway is cofactor biosynthesis; 7,8-dihydroneopterin triphosphate biosynthesis; 7,8-dihydroneopterin triphosphate from GTP: step 1/1. Converts GTP to 7,8-dihydroneopterin triphosphate. The chain is GTP cyclohydrolase FolE2 from Bdellovibrio bacteriovorus (strain ATCC 15356 / DSM 50701 / NCIMB 9529 / HD100).